The primary structure comprises 603 residues: DNA mismatch repair protein MutL (603 aa).

This sequence belongs to the DNA mismatch repair MutL/HexB family.

Its function is as follows. This protein is involved in the repair of mismatches in DNA. It is required for dam-dependent methyl-directed DNA mismatch repair. May act as a 'molecular matchmaker', a protein that promotes the formation of a stable complex between two or more DNA-binding proteins in an ATP-dependent manner without itself being part of a final effector complex. This Nitrobacter winogradskyi (strain ATCC 25391 / DSM 10237 / CIP 104748 / NCIMB 11846 / Nb-255) protein is DNA mismatch repair protein MutL.